We begin with the raw amino-acid sequence, 746 residues long: SNF-related serine/threonine-protein kinase (746 aa).

The Protein kinase domain maps to 16 to 269 (YDLDKTLGRG…LEEIESHPWL (254 aa)). Residues 22 to 30 (LGRGHFAVV) and Lys-45 contribute to the ATP site. Residue Asp-139 is the Proton acceptor of the active site. Ser-162 carries the phosphoserine modification. A Phosphothreonine; by LKB1 modification is found at Thr-173. Residues 291-334 (SEEEHNSIIQRMVLGDIADRDAIVEALETNRYNHITATYFLLAE) enclose the UBA domain. Phosphoserine is present on residues Ser-362, Ser-390, Ser-482, Ser-495, and Ser-518. Positions 383–414 (SHATVPQSPARAGDSVLNGHRSKGLCDPAKKD) are disordered. The span at 494–503 (ESDDEFDMDE) shows a compositional bias: acidic residues. The disordered stretch occupies residues 494–638 (ESDDEFDMDE…SSSSSPASAA (145 aa)). Residues 522 to 532 (VHKRYHRRKSQ) are compositionally biased toward basic residues. Residues 533-542 (GRGSSCSSSE) show a composition bias toward low complexity. Arg-534 carries the omega-N-methylarginine modification. Residues 549–558 (ESRRRLDKDS) are compositionally biased toward basic and acidic residues. Composition is skewed to gly residues over residues 575-592 (GSEG…GGGV) and 600-614 (QGTG…GGTP). Residues 615–638 (SGTAGSSRRCAGPDSSSSSPASAA) show a composition bias toward low complexity.

The protein belongs to the protein kinase superfamily. CAMK Ser/Thr protein kinase family. Requires Mg(2+) as cofactor. Autophosphorylated. Phosphorylation on Thr-173 by STK11/LKB1 in complex with STE20-related adapter-alpha (STRADA) pseudo kinase and CAB39. Ubiquitously expressed in all tissues examined with highest levels in the brain and testis. Strongly expressed in the pyramidal and granule neurons of the hippocampus and also in the cerebellum.

The protein localises to the nucleus. It catalyses the reaction L-seryl-[protein] + ATP = O-phospho-L-seryl-[protein] + ADP + H(+). The catalysed reaction is L-threonyl-[protein] + ATP = O-phospho-L-threonyl-[protein] + ADP + H(+). Its activity is regulated as follows. Activated by phosphorylation on Thr-173. Its function is as follows. May play a role in hematopoietic cell proliferation or differentiation. Potential mediator of neuronal apoptosis. The protein is SNF-related serine/threonine-protein kinase of Rattus norvegicus (Rat).